Consider the following 528-residue polypeptide: Catalase (528 aa).

Residues 1 to 22 show a composition bias toward basic and acidic residues; sequence MADRREKSADQMKLWKESRANQ. The disordered stretch occupies residues 1 to 32; that stretch reads MADRREKSADQMKLWKESRANQKPDVLTTGGG. Residues H75 and N148 contribute to the active site. Residues H194, S201, R203, N213, K237, W303, H305, and K306 each coordinate NADP(+). Y358 contacts heme. The short motif at 525–528 is the Microbody targeting signal; atypical element; that stretch reads KANL.

This sequence belongs to the catalase family. Homotetramer. Heme is required as a cofactor. The cofactor is NADP(+).

The protein resides in the peroxisome matrix. It catalyses the reaction 2 H2O2 = O2 + 2 H2O. In terms of biological role, catalyzes the degradation of hydrogen peroxide (H(2)O(2)) generated by peroxisomal oxidases to water and oxygen, thereby protecting cells from the toxic effects of hydrogen peroxide. In Glandirana rugosa (Japanese wrinkled frog), this protein is Catalase (cat).